The sequence spans 282 residues: Nucleotide-binding protein PXO_02223 (282 aa).

An ATP-binding site is contributed by 5–12; that stretch reads GLSGSGKS. Residue 57–60 coordinates GTP; the sequence is DVRS.

Belongs to the RapZ-like family.

In terms of biological role, displays ATPase and GTPase activities. This chain is Nucleotide-binding protein PXO_02223, found in Xanthomonas oryzae pv. oryzae (strain PXO99A).